The sequence spans 286 residues: Transmembrane protein 156 (286 aa).

Over 1-4 (MTET) the chain is Cytoplasmic. Residues 5–25 (AFLKLFVAIVITFILVLPEFF) traverse the membrane as a helical segment. Residues 26–214 (KTPKERTLEL…KSVTCSMKIT (189 aa)) are Extracellular-facing. N-linked (GlcNAc...) asparagine glycosylation is found at asparagine 45, asparagine 54, asparagine 76, and asparagine 142. Residues 215 to 235 (WYVLVLFVFMLGIIFIIYKIL) traverse the membrane as a helical segment. Residues 236–286 (EEHRRVWRRQSHNYKSSSVLFRGHDSGKLSTLNVRVIPGYPWTIWTRDFDE) lie on the Cytoplasmic side of the membrane.

It localises to the membrane. This chain is Transmembrane protein 156 (Tmem156), found in Rattus norvegicus (Rat).